Reading from the N-terminus, the 71-residue chain is Disintegrin ussuristatin-2 (71 aa).

The region spanning 1–71 (EAGEECDCGA…QSADCPRNGF (71 aa)) is the Disintegrin domain. Intrachain disulfides connect Cys-6–Cys-21, Cys-8–Cys-16, Cys-15–Cys-38, Cys-29–Cys-35, Cys-34–Cys-59, and Cys-47–Cys-66. The Cell attachment site; atypical (KGD) signature appears at 51–53 (KGD).

Belongs to the venom metalloproteinase (M12B) family. P-II subfamily. P-IId sub-subfamily. As to quaternary structure, homodimer. Expressed by the venom gland.

It localises to the secreted. Suppress platelet aggregation induced by ADP, collagen, thrombin, and epinephrine (IC(50)=170-330 nM). Also dose-dependently inhibits the adhesion of human melanoma cells to fibrinogen but not to fibronectin. The protein is Disintegrin ussuristatin-2 of Gloydius ussuriensis (Ussuri mamushi).